A 551-amino-acid chain; its full sequence is Rqc2 homolog RqcH (551 aa).

The required for fibronectin binding stretch occupies residues Y363–S551.

Belongs to the NEMF family. Associates with stalled 50S ribosomal subunits, binds to RqcP. Interacts with human fibronectin.

The protein resides in the cell surface. It localises to the cytoplasm. Its function is as follows. Key component of the ribosome quality control system (RQC), a ribosome-associated complex that mediates the extraction of incompletely synthesized nascent chains from stalled ribosomes and their subsequent degradation. RqcH recruits Ala-charged tRNA, and with RqcP directs the elongation of stalled nascent chains on 50S ribosomal subunits, leading to non-templated C-terminal alanine extensions (Ala tail). The Ala tail promotes nascent chain degradation. May add between 1 and at least 8 Ala residues. Binds to stalled 50S ribosomal subunits. Recombinant protein binds to immobilized human fibronectin; binding is saturable and competed by heparin. Recombinant protein inhibits binding of whole cells to fibronectin. The chain is Rqc2 homolog RqcH from Streptococcus pneumoniae (strain ATCC BAA-255 / R6).